Reading from the N-terminus, the 495-residue chain is Cobyric acid synthase (495 aa).

One can recognise a GATase cobBQ-type domain in the interval Ser250–Trp444. Cys331 acts as the Nucleophile in catalysis. His436 is an active-site residue.

It belongs to the CobB/CobQ family. CobQ subfamily.

It functions in the pathway cofactor biosynthesis; adenosylcobalamin biosynthesis. Functionally, catalyzes amidations at positions B, D, E, and G on adenosylcobyrinic A,C-diamide. NH(2) groups are provided by glutamine, and one molecule of ATP is hydrogenolyzed for each amidation. The sequence is that of Cobyric acid synthase from Rippkaea orientalis (strain PCC 8801 / RF-1) (Cyanothece sp. (strain PCC 8801)).